The following is a 555-amino-acid chain: Glucose-6-phosphate isomerase (555 aa).

E365 serves as the catalytic Proton donor. Active-site residues include H396 and K522.

The protein belongs to the GPI family.

It is found in the cytoplasm. It carries out the reaction alpha-D-glucose 6-phosphate = beta-D-fructose 6-phosphate. It participates in carbohydrate biosynthesis; gluconeogenesis. Its pathway is carbohydrate degradation; glycolysis; D-glyceraldehyde 3-phosphate and glycerone phosphate from D-glucose: step 2/4. Its function is as follows. Catalyzes the reversible isomerization of glucose-6-phosphate to fructose-6-phosphate. This is Glucose-6-phosphate isomerase from Psychrobacter cryohalolentis (strain ATCC BAA-1226 / DSM 17306 / VKM B-2378 / K5).